The chain runs to 147 residues: Hemoglobin subunit gamma (147 aa).

In terms of domain architecture, Globin spans 3–147 (NFTAEDKAAI…VASALASRYH (145 aa)). Heme b-binding residues include histidine 64 and histidine 93.

This sequence belongs to the globin family. Heterotetramer of two alpha chains and two gamma chains in fetal hemoglobin (Hb F). As to expression, red blood cells.

Functionally, gamma chains make up the fetal hemoglobin F, in combination with alpha chains. This is Hemoglobin subunit gamma (HBG1) from Callithrix jacchus (White-tufted-ear marmoset).